Reading from the N-terminus, the 562-residue chain is Long-chain-fatty-acid--CoA ligase (562 aa).

213–224 (YTGGTTGVAKGA) is a binding site for ATP.

It belongs to the ATP-dependent AMP-binding enzyme family. It depends on Mg(2+) as a cofactor.

It localises to the membrane. It carries out the reaction a long-chain fatty acid + ATP + CoA = a long-chain fatty acyl-CoA + AMP + diphosphate. It participates in lipid metabolism; fatty acid beta-oxidation. Functionally, catalyzes the esterification, concomitant with transport, of exogenous long-chain fatty acids into metabolically active CoA thioesters for subsequent degradation or incorporation into phospholipids. The sequence is that of Long-chain-fatty-acid--CoA ligase (fadD) from Yersinia pestis.